We begin with the raw amino-acid sequence, 335 residues long: Biotin synthase (335 aa).

Residues 47–276 (FYGKKVKLNM…SKEIRISGGR (230 aa)) enclose the Radical SAM core domain. The [4Fe-4S] cluster site is built by Cys65, Cys69, and Cys72. [2Fe-2S] cluster contacts are provided by Cys109, Cys141, Cys201, and Arg271.

The protein belongs to the radical SAM superfamily. Biotin synthase family. As to quaternary structure, homodimer. The cofactor is [4Fe-4S] cluster. [2Fe-2S] cluster is required as a cofactor.

The enzyme catalyses (4R,5S)-dethiobiotin + (sulfur carrier)-SH + 2 reduced [2Fe-2S]-[ferredoxin] + 2 S-adenosyl-L-methionine = (sulfur carrier)-H + biotin + 2 5'-deoxyadenosine + 2 L-methionine + 2 oxidized [2Fe-2S]-[ferredoxin]. Its pathway is cofactor biosynthesis; biotin biosynthesis; biotin from 7,8-diaminononanoate: step 2/2. Its function is as follows. Catalyzes the conversion of dethiobiotin (DTB) to biotin by the insertion of a sulfur atom into dethiobiotin via a radical-based mechanism. This Bacillus subtilis subsp. natto protein is Biotin synthase.